A 73-amino-acid polypeptide reads, in one-letter code: Metallothionein-like protein type 2 (73 aa).

The protein belongs to the metallothionein superfamily. Type 15 family.

Its function is as follows. Metallothioneins have a high content of cysteine residues that bind various heavy metals. The chain is Metallothionein-like protein type 2 from Solanum lycopersicum (Tomato).